The following is a 681-amino-acid chain: Translation factor GUF1 homolog, chloroplastic (681 aa).

The transit peptide at 1–51 directs the protein to the chloroplast; sequence MAMASAMDLSSPPTFFLSGTSTSSPSLRRLSSISVSGFRRHSNRKLQILCQ. The 182-residue stretch at 84 to 265 folds into the tr-type G domain; that stretch reads SNIRNFSIIA…AIVQRIPAPL (182 aa). Residues 93-100, 158-162, and 212-215 contribute to the GTP site; these read AHIDHGKS, DTPGH, and NKID.

The protein belongs to the TRAFAC class translation factor GTPase superfamily. Classic translation factor GTPase family. LepA subfamily.

Its subcellular location is the plastid. The protein localises to the chloroplast. It catalyses the reaction GTP + H2O = GDP + phosphate + H(+). In terms of biological role, promotes chloroplast protein synthesis. May act as a fidelity factor of the translation reaction, by catalyzing a one-codon backward translocation of tRNAs on improperly translocated ribosomes. The protein is Translation factor GUF1 homolog, chloroplastic of Arabidopsis thaliana (Mouse-ear cress).